Reading from the N-terminus, the 834-residue chain is 5-hydroxytryptamine receptor 2A (834 aa).

Topologically, residues 1-230 are extracellular; sequence MAHETSFNDA…TQLLRMAVTS (230 aa). The interval 56–75 is disordered; that stretch reads TDDGQLEDTNNNNNSKRYYS. N-linked (GlcNAc...) asparagine glycans are attached at residues asparagine 68, asparagine 97, asparagine 161, asparagine 175, asparagine 183, asparagine 194, asparagine 203, and asparagine 209. The chain crosses the membrane as a helical span at residues 231–253; that stretch reads VLLGLMILVTIIGNVFVIAAIIL. Residues 254 to 263 lie on the Cytoplasmic side of the membrane; the sequence is ERNLQNVANY. A helical membrane pass occupies residues 264–285; that stretch reads LVASLAVADLFVACLVMPLGAV. The Extracellular portion of the chain corresponds to 286–300; that stretch reads YEISQGWILGPELCD. A disulfide bond links cysteine 299 and cysteine 378. Residues 301-322 form a helical membrane-spanning segment; sequence IWTSCDVLCCTASILHLVAIAV. Residues 323–341 are Cytoplasmic-facing; that stretch reads DRYWAVTNIDYIHSRTSNR. The helical transmembrane segment at 342–364 threads the bilayer; that stretch reads VFMMIFCVWTAAVIVSLAPQFGW. At 365–391 the chain is on the extracellular side; the sequence is KDPDYLQRIEQQKCMVSQDVSYQVFAT. Residues 392-413 form a helical membrane-spanning segment; that stretch reads CCTFYVPLLVILALYWKIYQTA. The Cytoplasmic segment spans residues 414 to 752; sequence RKRIHRRRPR…AKRERKAAKT (339 aa). Disordered stretches follow at residues 420-442, 460-516, 531-599, 617-640, and 674-743; these read RRPR…ATDT, KTGS…STSG, QQGK…SEDQ, LEQV…TSNA, and STLT…TLEA. Polar residues-rich tracts occupy residues 482 to 502 and 532 to 542; these read GNST…SNVD and QGKSTAKSSAA. Over residues 551-564 the composition is skewed to basic and acidic residues; the sequence is RQEDDGQRPEHGEQ. A compositionally biased stretch (acidic residues) spans 565 to 575; that stretch reads EDREELEDQDE. Low complexity predominate over residues 582-593; sequence TTATSATTAAGT. The span at 674–694 shows a compositional bias: polar residues; the sequence is STLTSCNQSHPLCGTANESPS. Over residues 702–723 the composition is skewed to low complexity; it reads QPTTPQQQPHQQAHQQQQQQQQ. A helical transmembrane segment spans residues 753 to 776; sequence LAIITGAFVVCWLPFFVMALTMPL. At 777–785 the chain is on the extracellular side; the sequence is CAACQISDS. A helical membrane pass occupies residues 786–808; it reads VASLFLWLGYFNSTLNPVIYTIF. Topologically, residues 809–834 are cytoplasmic; the sequence is SPEFRQAFKRILFGGHRPVHYRSGKL.

Belongs to the G-protein coupled receptor 1 family.

The protein localises to the cell membrane. Its function is as follows. This is one of the several different receptors for 5-hydroxytryptamine (serotonin), a biogenic hormone that functions as a neurotransmitter, a hormone, and a mitogen. The activity of this receptor is mediated by G proteins which inhibit adenylate cyclase. The chain is 5-hydroxytryptamine receptor 2A (5-HT1A) from Drosophila melanogaster (Fruit fly).